Consider the following 315-residue polypeptide: MKWSEISIHTTNEAIEPISNILHETGASGLVIEDPLDLERVEKAEFGELYDLDPALYPEEGVRIKAYLPMNSFLGETVEEIKSAINQLLIYDIDLGKNEVSLSEVHEEEWATAWKKYYKPVKISNRITITPTWEEYTPVSSDELIIELDPGMAFGTGTHPTTVLSIQGLEAYVKPGDLVMDVGCGSGVLSIAAAKLGADKVNAYDLDEIAVKSTKLNSKLNQIHESVKVKQNNLLEGVQQEADVIVSNILAEIIVRFVDDAWSNLKAGGYFITSGIIQNKKQLVIDNLTKQGFEVISLNEMEDWVSIVAKKPSEK.

The S-adenosyl-L-methionine site is built by threonine 162, glycine 183, aspartate 205, and asparagine 248.

It belongs to the methyltransferase superfamily. PrmA family.

It localises to the cytoplasm. The catalysed reaction is L-lysyl-[protein] + 3 S-adenosyl-L-methionine = N(6),N(6),N(6)-trimethyl-L-lysyl-[protein] + 3 S-adenosyl-L-homocysteine + 3 H(+). In terms of biological role, methylates ribosomal protein L11. This is Ribosomal protein L11 methyltransferase from Oceanobacillus iheyensis (strain DSM 14371 / CIP 107618 / JCM 11309 / KCTC 3954 / HTE831).